A 220-amino-acid polypeptide reads, in one-letter code: Deoxyribose-phosphate aldolase (220 aa).

Residue Asp89 is the Proton donor/acceptor of the active site. The active-site Schiff-base intermediate with acetaldehyde is the Lys151. Lys180 functions as the Proton donor/acceptor in the catalytic mechanism.

The protein belongs to the DeoC/FbaB aldolase family. DeoC type 1 subfamily.

The protein resides in the cytoplasm. It catalyses the reaction 2-deoxy-D-ribose 5-phosphate = D-glyceraldehyde 3-phosphate + acetaldehyde. It functions in the pathway carbohydrate degradation; 2-deoxy-D-ribose 1-phosphate degradation; D-glyceraldehyde 3-phosphate and acetaldehyde from 2-deoxy-alpha-D-ribose 1-phosphate: step 2/2. Its function is as follows. Catalyzes a reversible aldol reaction between acetaldehyde and D-glyceraldehyde 3-phosphate to generate 2-deoxy-D-ribose 5-phosphate. This Streptococcus uberis (strain ATCC BAA-854 / 0140J) protein is Deoxyribose-phosphate aldolase.